The primary structure comprises 370 residues: Protein-tyrosine sulfotransferase 1 (370 aa).

Residues 1–8 lie on the Cytoplasmic side of the membrane; the sequence is MVGKLKQN. Residues 9 to 25 traverse the membrane as a helical; Signal-anchor for type II membrane protein segment; sequence LLLACLVISSVTVFYLG. Over 26 to 370 the chain is Lumenal; the sequence is QHAMECHHRI…KEKPQTEQVE (345 aa). The N-linked (GlcNAc...) asparagine glycan is linked to Asn60. 79–83 is a binding site for 3'-phosphoadenylyl sulfate; the sequence is RSGTT. A disulfide bridge links Cys97 with Cys157. Glu100 acts as the Proton donor/acceptor in catalysis. The interval 102–106 is interaction with peptide substrate; the sequence is RVIPR. 3'-phosphoadenylyl sulfate-binding residues include Arg184, Ser192, and Arg196. Cysteines 226 and 234 form a disulfide. Tyr239 contacts 3'-phosphoadenylyl sulfate. Asn262 is a glycosylation site (N-linked (GlcNAc...) asparagine). 3'-phosphoadenylyl sulfate-binding positions include 286–295 and Lys301; that span reads STDQVIKPVN.

This sequence belongs to the protein sulfotransferase family. In terms of assembly, homodimer. Can also form heterodimers with TPST2. N-glycosylated. As to expression, ubiquitous. Detected in heart, brain, placenta, lung, liver, skeletal muscle, kidney and pancreas.

It localises to the golgi apparatus membrane. The enzyme catalyses L-tyrosyl-[protein] + 3'-phosphoadenylyl sulfate = O-sulfo-L-tyrosine-[protein] + adenosine 3',5'-bisphosphate + H(+). In terms of biological role, catalyzes the O-sulfation of tyrosine residues within acidic motifs of polypeptides, using 3'-phosphoadenylyl sulfate (PAPS) as cosubstrate. The protein is Protein-tyrosine sulfotransferase 1 (TPST1) of Homo sapiens (Human).